The primary structure comprises 131 residues: Encapsulated ferritin-like protein (131 aa).

Fe cation is bound by residues E30, E60, and H63. The interval 96–131 (EEEDTGSSSSVAASPTSAPSHGSLGIGSLRQEGKED) is disordered. Residues 98–131 (EDTGSSSSVAASPTSAPSHGSLGIGSLRQEGKED) form a targeting peptide region. Residues 102–115 (SSSSVAASPTSAPS) show a composition bias toward low complexity.

Belongs to the ferritin-like superfamily. EncFtn family. Forms dimers at all pH tested; under acidic conditions formes decamers. The N-terminal domain (residues 1-97) crystallizes as a decameric ring. Four decamers are loaded in the encapsulin nanocompartment in a tetrahedral arrangement. A 3 nm gap is consistently seen between the shell and the cargo. The target peptide extends away from the decameric ring, to allow binding to the interior of the encapsulin nanocompartment shell.

It localises to the encapsulin nanocompartment. It catalyses the reaction 4 Fe(2+) + O2 + 4 H(+) = 4 Fe(3+) + 2 H2O. Its activity is regulated as follows. The ferroxidase activity is inhibited by zinc. Cargo protein of a type 1 encapsulin nanocompartment. A ferritin-like ferroxidase that converts Fe(2+) to Fe(3+) iron inside the encapsulin nanocompartment. Mineralized Fe(3+) is released to the exterior of the decameric complex for deposition in the encapsulin nanocompartment. In solution the decamer binds 10-15 iron cations; in the encapsulin nanocompartment the decamer can bind up to 48 ions, perhaps via its internal channel, and on its exterior. The cargo-loaded nanocompartment maximally sequesters up to 4150 Fe ions. This chain is Encapsulated ferritin-like protein, found in Haliangium ochraceum (strain DSM 14365 / JCM 11303 / SMP-2).